The sequence spans 3779 residues: Protein DDB_G0268328 (3779 aa).

12 disordered regions span residues 24–56 (RQIKSQNKLQNKSQNNGNNNNNKDNNNINKDGS), 1001–1028 (HEDEEEEGDGDNSNNSNSQDSDGDDDDD), 1137–1165 (QDSTLPKRKQHGYYHQQQQQQQYHQQQQQ), 1513–1538 (PTNSIYNNNNNNNNNNNNTNSSSLLS), 1656–1690 (ETTVLEKETKETKDNNLENNNNNTNNSNNNNNNKE), 2027–2054 (SNSSNNNNNNNDGSTTSTTTLNRSDSNN), 2144–2184 (NNNN…NNSS), 2280–2325 (ISTT…NEQQ), 2508–2527 (QINNNNNNNEKEEEEEREEG), 2720–2748 (DGNNNNNNNNNQNNNNQNNNNNQNNNDSS), 2975–3030 (ESND…DSIK), and 3427–3450 (QSNTLNGTGGGGGNGGGNNGSGKL). Low complexity-rich tracts occupy residues 26–56 (IKSQNKLQNKSQNNGNNNNNKDNNNINKDGS), 1011–1020 (DNSNNSNSQD), 1149–1165 (YYHQQQQQQQYHQQQQQ), and 1515–1538 (NSIYNNNNNNNNNNNNTNSSSLLS). Basic and acidic residues predominate over residues 1656–1671 (ETTVLEKETKETKDNN). A compositionally biased stretch (low complexity) spans 1672–1687 (LENNNNNTNNSNNNNN). Low complexity-rich tracts occupy residues 2144-2182 (NNNNNNNNNNNNNNNNNNNNNNNNNNNNNNNNNNNNNNN) and 2285-2322 (NNNNNNNNNNNNNNNNNNNNNNNNNNNNNNNNNNNNNN). Composition is skewed to low complexity over residues 2722–2745 (NNNNNNNNNQNNNNQNNNNNQNNN) and 3015–3030 (SVNNNNNNNSNSDSIK). Residues 3433–3446 (GTGGGGGNGGGNNG) show a composition bias toward gly residues.

The sequence is that of Protein DDB_G0268328 from Dictyostelium discoideum (Social amoeba).